A 734-amino-acid polypeptide reads, in one-letter code: ATP-dependent RNA helicase SUV3L, mitochondrial (734 aa).

The transit peptide at 1–60 directs the protein to the mitochondrion; the sequence is MAAAAAIAAALLRRSTSSQHHRRILLLPLLSHLQRAAPRSPSPWDPPPHHRFFFSSDVTA. Residues 58-88 form a disordered region; that stretch reads VTAEGDSKPRPPLDGKQLWREVSTSEPATGA. A compositionally biased stretch (basic and acidic residues) spans 62 to 76; it reads GDSKPRPPLDGKQLW. A Helicase ATP-binding domain is found at 198–356; it reads FARAMRRRVV…RFKPLVVEAK (159 aa). Residue 211–218 participates in ATP binding; it reads GPTNSGKT. Residues 357 to 525 form the Helicase C-terminal domain; it reads TLLGDLKNVR…SFAIQFPDLT (169 aa). N-linked (GlcNAc...) asparagine glycosylation is found at Asn-594 and Asn-614. The interval 667-734 is disordered; that stretch reads ASWKPTSRQQ…QDPSSLNFVA (68 aa). Over residues 684–693 the composition is skewed to acidic residues; sequence EEDNDVEQAS. Residues 695–709 are compositionally biased toward basic and acidic residues; that stretch reads DNAKNDSEDGYERSI. An N-linked (GlcNAc...) asparagine glycan is attached at Asn-699. The span at 725 to 734 shows a compositional bias: polar residues; sequence QDPSSLNFVA.

The protein belongs to the helicase family. As to quaternary structure, homodimer; in free form. Component of the mitochondrial degradosome (mtEXO) complex which is a heteropentamer containing 2 copies of SUPV3L1 and 3 copies of PNPT1. The cofactor is Mg(2+). Requires Mn(2+) as cofactor.

It localises to the nucleus. It is found in the mitochondrion matrix. Its subcellular location is the mitochondrion nucleoid. It catalyses the reaction ATP + H2O = ADP + phosphate + H(+). Major helicase player in mitochondrial RNA metabolism. Component of the mitochondrial degradosome (mtEXO) complex, that degrades 3' overhang double-stranded RNA with a 3'-to-5' directionality in an ATP-dependent manner. ATPase and ATP-dependent multisubstrate helicase, able to unwind double-stranded (ds) DNA and RNA, and RNA/DNA heteroduplexes in the 5'-to-3' direction. Plays a role in the RNA surveillance system in mitochondria; regulates the stability of mature mRNAs, the removal of aberrantly formed mRNAs and the rapid degradation of non coding processing intermediates. Confers salinity and drought stress tolerances by maintaining both photosynthesis and antioxidant machinery, probably via an increase in plant hormones levels such as gibberellic acid (GA(3)), the cytokinin zeatin (Z) and indole-3-acetic acid (IAA). The sequence is that of ATP-dependent RNA helicase SUV3L, mitochondrial from Oryza sativa subsp. japonica (Rice).